We begin with the raw amino-acid sequence, 460 residues long: Cell death abnormality protein 8 (460 aa).

Residues 1-45 (MYLKKHESKLLLIPKNEDKEDAGIIAVLTDRVPSVLIVRWFDLFC) lie on the Cytoplasmic side of the membrane. Residues 46-66 (FGFAMCSYVLDFFSDIGIAIF) traverse the membrane as a helical segment. At 67 to 77 (HFWAGRHLSGA) the chain is on the extracellular side. The helical transmembrane segment at 78–98 (LVLTFALIPSVIINIISMVWM) threads the bilayer. Over 99–123 (LDDEMHWKRRAHPRRTGTFELNQKR) the chain is Cytoplasmic. A helical membrane pass occupies residues 124 to 144 (FISLGKMITLCIFQMGPLFWY). Over 145–219 (YKALYYGWMF…YYISGKYPYW (75 aa)) the chain is Extracellular. Residues 220-240 (LYFQAASLTLSIISISWSVVV) traverse the membrane as a helical segment. At 241–274 (QNRSLRMTRDDKVNIWPHEAVLQFCWRFLTILAR) the chain is on the cytoplasmic side. The chain crosses the membrane as a helical span at residues 275 to 295 (IITLVAFVLLFGIYVVFLIFG). Over 296–320 (HLIVTLVHVIFLQALHIEACTHIEK) the chain is Extracellular. A helical transmembrane segment spans residues 321–341 (LLLLINAMIHLFTPFNMAEGN). Residues 342–353 (TRYRYLVAYTVE) lie on the Cytoplasmic side of the membrane. Residues 354–374 (FIEMMIIFLLLPTPLDAFPLI) form a helical membrane-spanning segment. Topologically, residues 375 to 378 (EKIR) are extracellular. The chain crosses the membrane as a helical span at residues 379 to 399 (IGVPATFFIGIFIMLIYYKFF). The Cytoplasmic portion of the chain corresponds to 400-460 (HPNRRQDLEA…SLLEEDECHN (61 aa)).

It belongs to the XK family. Cleavage by ced-3 activates ced-8 function in promoting phosphatidylserine exposure at the surface of apoptotic cells.

It is found in the cell membrane. Functionally, acts downstream of ced-9 and caspase ced-3 to promote phosphatidylserine exposure on apoptotic cell surface, possibly by mediating phospholipid scrambling. Phosphatidylserine is a specific marker only present at the surface of apoptotic cells and acts as a specific signal for engulfment. Regulates apoptosis kinetics during embryonic development. Not required for engulfment of germ cell corpses. In Caenorhabditis briggsae, this protein is Cell death abnormality protein 8.